Here is a 543-residue protein sequence, read N- to C-terminus: CBS domain-containing protein CBSCBSPB1 (543 aa).

Positions 1-35 are disordered; the sequence is MASQGGPRRSLSVTTASLHGKKKSMDMAERGLDTG. Ser-17 is modified (phosphoserine). Residues 23-35 show a composition bias toward basic and acidic residues; the sequence is KSMDMAERGLDTG. CBS domains follow at residues 59 to 118, 125 to 183, 225 to 285, and 293 to 350; these read RLSK…NVEE, MTKN…RAAE, IIPD…LPPS, and MTQN…AGTT. A disordered region spans residues 372-393; that stretch reads LSPNEDDEDSRSESSMKVASEA. The PB1 domain occupies 402 to 489; it reads ANTFSFKIED…KSLRLHLDDS (88 aa). The helical transmembrane segment at 518–538 threads the bilayer; sequence AYSGVAAGAALVAGLGFMAFL.

The protein resides in the membrane. This Arabidopsis thaliana (Mouse-ear cress) protein is CBS domain-containing protein CBSCBSPB1 (CBSCBSPB1).